The following is a 582-amino-acid chain: Protein alan shepard (582 aa).

The segment covering 1-12 has biased composition (pro residues); sequence MHPRYSPAPPPQ. The disordered stretch occupies residues 1-73; that stretch reads MHPRYSPAPP…AAPPTSRSAF (73 aa). Tyrosine 5 carries the phosphotyrosine modification. Residues 13 to 24 are compositionally biased toward low complexity; it reads QQQQMGGPPHQQ. Over residues 25–35 the composition is skewed to gly residues; it reads QGGGGGGGGSM. Over residues 37–57 the composition is skewed to polar residues; sequence GPSNAQQLPPQIPRSQNYSNG. Over residues 58 to 72 the composition is skewed to low complexity; that stretch reads SSSSAAAAPPTSRSA. 2 positions are modified to phosphotyrosine: tyrosine 125 and tyrosine 142. A disordered region spans residues 164 to 225; it reads PATTTYGQRV…TVQNQNQQGG (62 aa). Over residues 178-225 the composition is skewed to low complexity; sequence SPSNTNSSSSSNTGSQSGTLSTSLSNTTNTNTNMGPNGTVQNQNQQGG. RRM domains lie at 231 to 304 and 310 to 389; these read TNLY…MAKQ and TNLY…FADG. Residues 555–582 form a disordered region; sequence PMTDSEQASTAASPDEAYTQYPHQAAPK.

In terms of biological role, has a role in the perception of gravity. The protein is Protein alan shepard of Drosophila erecta (Fruit fly).